A 372-amino-acid polypeptide reads, in one-letter code: Uroporphyrinogen decarboxylase (372 aa).

Residues 35–39, D85, Y166, S221, and H342 each bind substrate; that span reads RQAGR.

Belongs to the uroporphyrinogen decarboxylase family. In terms of assembly, homodimer.

The protein localises to the cytoplasm. It carries out the reaction uroporphyrinogen III + 4 H(+) = coproporphyrinogen III + 4 CO2. Its pathway is porphyrin-containing compound metabolism; protoporphyrin-IX biosynthesis; coproporphyrinogen-III from 5-aminolevulinate: step 4/4. Functionally, catalyzes the decarboxylation of four acetate groups of uroporphyrinogen-III to yield coproporphyrinogen-III. This Methylibium petroleiphilum (strain ATCC BAA-1232 / LMG 22953 / PM1) protein is Uroporphyrinogen decarboxylase.